Here is a 157-residue protein sequence, read N- to C-terminus: SsrA-binding protein (157 aa).

This sequence belongs to the SmpB family.

Its subcellular location is the cytoplasm. Functionally, required for rescue of stalled ribosomes mediated by trans-translation. Binds to transfer-messenger RNA (tmRNA), required for stable association of tmRNA with ribosomes. tmRNA and SmpB together mimic tRNA shape, replacing the anticodon stem-loop with SmpB. tmRNA is encoded by the ssrA gene; the 2 termini fold to resemble tRNA(Ala) and it encodes a 'tag peptide', a short internal open reading frame. During trans-translation Ala-aminoacylated tmRNA acts like a tRNA, entering the A-site of stalled ribosomes, displacing the stalled mRNA. The ribosome then switches to translate the ORF on the tmRNA; the nascent peptide is terminated with the 'tag peptide' encoded by the tmRNA and targeted for degradation. The ribosome is freed to recommence translation, which seems to be the essential function of trans-translation. The chain is SsrA-binding protein from Levilactobacillus brevis (strain ATCC 367 / BCRC 12310 / CIP 105137 / JCM 1170 / LMG 11437 / NCIMB 947 / NCTC 947) (Lactobacillus brevis).